The chain runs to 330 residues: 1,8-cineole synthase (330 aa).

Aspartate 81 is a Mg(2+) binding site. The short motif at 81–85 (DDHFD) is the DDXXD motif element. Arginine 174 is a binding site for substrate. Mg(2+) is bound by residues asparagine 220 and serine 224. Residues 220-228 (NDVLSLEKE) carry the NXXXSXXXE motif motif. Position 227 (lysine 227) interacts with substrate. Glutamate 228 contacts Mg(2+). 314–315 (RY) is a binding site for substrate.

The protein belongs to the terpene synthase family. As to quaternary structure, homodimer. The cofactor is Mg(2+).

It catalyses the reaction (2E)-geranyl diphosphate + H2O = 1,8-cineole + diphosphate. The catalysed reaction is neryl diphosphate + H2O = 1,8-cineole + diphosphate. In terms of biological role, in vitro, catalyzes the formation of 1,8-cineole from geranyl diphosphate (GPP). Can also accept neryl diphosphate (NPP) as substrate to produce 1,8-cineole. The polypeptide is 1,8-cineole synthase (Streptomyces clavuligerus).